A 153-amino-acid chain; its full sequence is Large ribosomal subunit protein uL15 (153 aa).

The segment at 1-48 is disordered; the sequence is MRLNELSPAPGSKKDRKRVGRGDAGRGNYSGRGMKGQKARSGGATRPG.

It belongs to the universal ribosomal protein uL15 family. As to quaternary structure, part of the 50S ribosomal subunit.

Its function is as follows. Binds to the 23S rRNA. The protein is Large ribosomal subunit protein uL15 of Dehalococcoides mccartyi (strain ATCC BAA-2266 / KCTC 15142 / 195) (Dehalococcoides ethenogenes (strain 195)).